The following is a 313-amino-acid chain: MSKMESTQQMASSIINTSFEAAVVAATSTLELMGIQYDYNEVYTRVKSKFDYVMDDSGVKNNLLGKAATYDQALNGKFGSAARNRNWMADTRTTARLDEDVNKLRMMLSSKGIDQKMRVLNACFNVKRVPGKSSSIIKCTRLMRDKIERGEVEVDDSFVEEKMEVDTIDWKSRYEQLEKRFESLKQRVNEKYTSWVQKAKKVNENMYSLQNVISQQQSQIADLQNYCNKLEVDLQNKISSLVSSVEWYLKSMELPDEIKTDIEQQLNSIDVINPINAIDDFESLIRNIILDYDRIFLMFKGLMRQCNYEYTYE.

Positions 1 to 149 (MSKMESTQQM…TRLMRDKIER (149 aa)) are RNA-binding. The segment at 150 to 206 (GEVEVDDSFVEEKMEVDTIDWKSRYEQLEKRFESLKQRVNEKYTSWVQKAKKVNENM) is dimerization. Residues 166-237 (DTIDWKSRYE…NKLEVDLQNK (72 aa)) adopt a coiled-coil conformation. The tract at residues 170 to 234 (WKSRYEQLEK…NYCNKLEVDL (65 aa)) is interaction with host ZC3H7B. The interval 208 to 313 (SLQNVISQQQ…RQCNYEYTYE (106 aa)) is interaction with host EIF4G1.

The protein belongs to the rotavirus NSP3 family. In terms of assembly, homodimer. Interacts (via the coiled-coil region) with host ZC3H7B (via LD motif). Interacts with host EIF4G1.

It localises to the host cytoplasm. Plays an important role in stimulating the translation of viral mRNAs. These mRNAs are capped but not polyadenylated, instead terminating in a conserved sequence 'GACC' at the 3' that is recognized by NSP3, which competes with host PABPC1 for EIF4G1 binding. The interaction between NSP3 and host EIF4G1 stabilizes the EIF4E-EIF4G1 interaction, thereby facilitating the initiation of capped mRNA translation. The sequence is that of Non-structural protein 3 from Rotavirus A (strain RVA/Cow/United States/NCDV-Lincoln/1969/G6P6[1]) (RV-A).